Consider the following 394-residue polypeptide: Ceramide glucosyltransferase (394 aa).

The Lumenal portion of the chain corresponds to 1–10 (MAVLDLALQG). A helical membrane pass occupies residues 11 to 32 (LAIFGCVLFFVLWFMHFLSIVY). Topologically, residues 33–195 (TRLHLNKKVS…QVYFGTSHPR (163 aa)) are cytoplasmic. Residue Asp92 is a short sequence motif, D1. Residue Asp144 is a short sequence motif, D2. The helical transmembrane segment at 196 to 215 (SYISANVTGFKCVTGMSCLM) threads the bilayer. Residues 216–287 (RKEVLDQAGG…KLRINMLPAT (72 aa)) are Lumenal-facing. Position 236 (Asp236) is a short sequence motif, D3. Asp236 acts as the Proton acceptor in catalysis. The (Q/R)XXRW motif lies at 272 to 276 (RMIRW). Residues 288–304 (IICEPISECFVASLIIG) form a helical membrane-spanning segment. Residues 305-309 (WAAHH) lie on the Cytoplasmic side of the membrane. The chain crosses the membrane as a helical span at residues 310–328 (IFRWDIMVFFMCHCLAWFI). Topologically, residues 329 to 348 (FDYIQLRGVQGGPLNFSKLD) are lumenal. The chain crosses the membrane as a helical span at residues 349-369 (YAVAWFIRESMTIYIFLSALW). Residues 370-394 (DPTISWRTGRYRLRCGGTAEEILDV) lie on the Cytoplasmic side of the membrane.

Belongs to the glycosyltransferase 2 family.

The protein resides in the golgi apparatus membrane. The catalysed reaction is an N-acylsphing-4-enine + UDP-alpha-D-glucose = a beta-D-glucosyl-(1&lt;-&gt;1')-N-acylsphing-4-enine + UDP + H(+). It carries out the reaction UDP-alpha-D-xylose + an N-acylsphing-4-enine = a beta-D-xylosyl-(1&lt;-&gt;1')-N-acylsphing-4-enine + UDP + H(+). The enzyme catalyses N-(9Z-octadecenoyl)-sphing-4-enine + UDP-alpha-D-xylose = beta-D-xylosyl-(1&lt;-&gt;1')-N-(9Z-octadecenoyl)-sphing-4-enine + UDP + H(+). It participates in lipid metabolism; sphingolipid metabolism. In terms of biological role, participates in the initial step of the glucosylceramide-based glycosphingolipid/GSL synthetic pathway at the cytosolic surface of the Golgi. Catalyzes the transfer of glucose from UDP-glucose to ceramide to produce glucosylceramide/GlcCer (such as beta-D-glucosyl-(1&lt;-&gt;1')-N-acylsphing-4-enine). Glucosylceramide is the core component of glycosphingolipids/GSLs, amphipathic molecules consisting of a ceramide lipid moiety embedded in the outer leaflet of the membrane, linked to one of hundreds of different externally oriented oligosaccharide structures. Glycosphingolipids are essential components of membrane microdomains that mediate membrane trafficking and signal transduction. They are implicated in many fundamental cellular processes, including growth, differentiation, migration, morphogenesis, cell-to-cell and cell-to-matrix interactions. Catalyzes the synthesis of xylosylceramide/XylCer (such as beta-D-xylosyl-(1&lt;-&gt;1')-N-acylsphing-4-enine) using UDP-Xyl as xylose donor. The protein is Ceramide glucosyltransferase (ugcg) of Xenopus tropicalis (Western clawed frog).